We begin with the raw amino-acid sequence, 3564 residues long: CUB and sushi domain-containing protein 1 (3564 aa).

The N-terminal stretch at 1 to 29 (MTAWRKFKSLLLPLVLAVLCAGLLTAAKG) is a signal peptide. The Extracellular segment spans residues 30–3487 (QNCGGLVQGP…NHYQGTSSGS (3458 aa)). Cystine bridges form between Cys-32/Cys-58, Cys-145/Cys-185, Cys-171/Cys-202, Cys-208/Cys-234, Cys-349/Cys-389, Cys-375/Cys-406, Cys-411/Cys-437, Cys-527/Cys-567, Cys-553/Cys-580, and Cys-584/Cys-610. In terms of domain architecture, CUB 1 spans 32–140 (CGGLVQGPNG…QGFKAMYEVL (109 aa)). N-linked (GlcNAc...) asparagine glycans are attached at residues Asn-40 and Asn-57. In terms of domain architecture, Sushi 1 spans 143–204 (HTCGNPGEIL…WDFPAPFCRA (62 aa)). The CUB 2 domain occupies 208 to 312 (CGGTLRGTSG…KGFNAQFQVK (105 aa)). A Sushi 2 domain is found at 347 to 408 (DMCPDPGIPD…WNDHRPICRA (62 aa)). Positions 411 to 522 (CGSNLRGPSG…PGFKAVYQEI (112 aa)) constitute a CUB 3 domain. One can recognise a Sushi 3 domain in the interval 525-582 (GGCGDPGIPAYGKRTGSSFLHGDTLTFECQAAFELVGERVITCQKNNQWSGNKPSCVF). Residues 584–692 (CFFNFTAPSG…RGFNITYTTF (109 aa)) form the CUB 4 domain. Asn-587 and Asn-686 each carry an N-linked (GlcNAc...) asparagine glycan. Residues 695–756 (NECHDPGIPV…WSSTVPRCEA (62 aa)) form the Sushi 4 domain. Disulfide bonds link Cys-697–Cys-738, Cys-723–Cys-754, Cys-758–Cys-784, Cys-873–Cys-913, Cys-899–Cys-926, and Cys-930–Cys-956. Positions 758-866 (CGGHLTASSG…VGFLIHYESV (109 aa)) constitute a CUB 5 domain. A Sushi 5 domain is found at 871-928 (DSCLDPGIPVNGQRHGSNFGIRSTVTFSCDPGYTLSDDEPLVCEKNHQWNHALPSCDA). The CUB 6 domain occupies 930-1040 (CGGYIHGKSG…EGFNITFAEY (111 aa)). Residues Asn-955, Asn-1015, and Asn-1034 are each glycosylated (N-linked (GlcNAc...) asparagine). The Sushi 6 domain maps to 1043–1102 (EPCDDPGVPAFSRRIGFQFGVGDTLAFTCFQGYRLEGATKLTCLGGGRRVWSAPLPRCVA). 3 disulfide bridges follow: Cys-1045-Cys-1085, Cys-1071-Cys-1100, and Cys-1104-Cys-1130. The region spanning 1104–1212 (CGASVKGNEG…QGFQLTYTSF (109 aa)) is the CUB 7 domain. N-linked (GlcNAc...) asparagine glycosylation is found at Asn-1184 and Asn-1197. The Sushi 7 domain maps to 1215–1275 (VKCEDPGIPN…WDKPMPSCVA (61 aa)). Cystine bridges form between Cys-1217/Cys-1258, Cys-1244/Cys-1273, Cys-1277/Cys-1304, Cys-1391/Cys-1431, Cys-1417/Cys-1447, Cys-1451/Cys-1477, Cys-1564/Cys-1604, Cys-1590/Cys-1621, Cys-1625/Cys-1651, Cys-1741/Cys-1781, Cys-1767/Cys-1798, and Cys-1802/Cys-1828. The CUB 8 domain maps to 1277 to 1386 (CGGLVHAATS…SGFSIQFSTS (110 aa)). In terms of domain architecture, Sushi 8 spans 1389–1449 (STCNDPGMPQ…WQPDPPSCIA (61 aa)). Residue Asn-1399 is glycosylated (N-linked (GlcNAc...) asparagine). In terms of domain architecture, CUB 9 spans 1451–1559 (CGGNLTGPAG…SGFAIEFKEK (109 aa)). Residues Asn-1454 and Asn-1572 are each glycosylated (N-linked (GlcNAc...) asparagine). In terms of domain architecture, Sushi 9 spans 1562–1623 (EACFDPGNIM…WDRALPACQA (62 aa)). The 109-residue stretch at 1625 to 1733 (CGGQYTGSEG…RGFHFVYQAV (109 aa)) folds into the CUB 10 domain. Asn-1644 is a glycosylation site (N-linked (GlcNAc...) asparagine). The 62-residue stretch at 1739-1800 (TQCSSVPEPR…WNDTIPSCVV (62 aa)) folds into the Sushi 10 domain. Asn-1792, Asn-1805, and Asn-1882 each carry an N-linked (GlcNAc...) asparagine glycan. A CUB 11 domain is found at 1802–1910 (CSGNFTQRRG…AGFHLEYKTV (109 aa)). The Sushi 11 domain occupies 1913–1972 (AACQEPALPSNGIKIGDRYMVNDVLSFQCEPGYTLQGRSHISCMPGTVRRWNYPSPLCIA). 3 disulfides stabilise this stretch: Cys-1915–Cys-1955, Cys-1941–Cys-1970, and Cys-1974–Cys-2000. Residues 1974–2082 (CGGTLTSMSG…QGFKLSYQAY (109 aa)) form the CUB 12 domain. Asn-2018 is a glycosylation site (N-linked (GlcNAc...) asparagine). Residues 2085–2144 (QNCPDPPAFQNGFMINSDYSVGQSISFECYPGYILLGHPVLTCQHGTDRNWNYPFPRCDA) form the Sushi 12 domain. Cystine bridges form between Cys-2087–Cys-2127, Cys-2113–Cys-2142, and Cys-2146–Cys-2172. A CUB 13 domain is found at 2146-2257 (CGYNVTSQNG…LNFHAFQLKR (112 aa)). Asn-2149, Asn-2154, and Asn-2187 each carry an N-linked (GlcNAc...) asparagine glycan. The Sushi 13 domain maps to 2256–2317 (KRCPPPPAVP…FQGSPPTCEA (62 aa)). 3 disulfides stabilise this stretch: Cys-2258-Cys-2300, Cys-2286-Cys-2315, and Cys-2319-Cys-2347. The CUB 14 domain occupies 2319-2430 (CPANEVRTES…KGFKIRYAAP (112 aa)). Asn-2358, Asn-2394, Asn-2400, Asn-2445, Asn-2470, and Asn-2503 each carry an N-linked (GlcNAc...) asparagine glycan. Sushi domains follow at residues 2430-2492 (PYCS…LCQA), 2493-2554 (VSCG…TCKP), 2555-2619 (VPCP…RCKV), 2620-2677 (ISCG…RCLA), 2678-2735 (GHCG…VCVP), 2736-2793 (ITCG…ICRV), 2794-2856 (VNCS…KCLA), 2857-2914 (ISCG…HCSG), 2918-2975 (GFCG…VCEA), 2976-3034 (VSCG…DCTI), 3035-3094 (ISCG…LCKA), 3095-3152 (VLCN…QCLP), 3153-3210 (VFCG…TCID), 3214-3272 (TACP…ECIP), and 3273-3332 (HACR…VCKS). 12 disulfide bridges follow: Cys-2432-Cys-2473, Cys-2459-Cys-2490, Cys-2495-Cys-2537, Cys-2521-Cys-2552, Cys-2557-Cys-2602, Cys-2588-Cys-2617, Cys-2622-Cys-2662, Cys-2648-Cys-2675, Cys-2680-Cys-2720, Cys-2706-Cys-2733, Cys-2738-Cys-2778, and Cys-2764-Cys-2791. The N-linked (GlcNAc...) asparagine glycan is linked to Asn-2605. N-linked (GlcNAc...) asparagine glycosylation is found at Asn-2750 and Asn-2761. Residue Asn-2795 is glycosylated (N-linked (GlcNAc...) asparagine). Cystine bridges form between Cys-2796-Cys-2841, Cys-2827-Cys-2854, Cys-2859-Cys-2899, Cys-2885-Cys-2912, Cys-2920-Cys-2960, Cys-2946-Cys-2973, Cys-2978-Cys-3019, Cys-3005-Cys-3032, Cys-3037-Cys-3079, Cys-3063-Cys-3092, Cys-3097-Cys-3137, Cys-3123-Cys-3150, Cys-3155-Cys-3195, Cys-3181-Cys-3208, Cys-3216-Cys-3257, Cys-3243-Cys-3270, Cys-3275-Cys-3317, and Cys-3302-Cys-3330. An N-linked (GlcNAc...) asparagine glycan is attached at Asn-2894. Asn-2963 is a glycosylation site (N-linked (GlcNAc...) asparagine). 3 N-linked (GlcNAc...) asparagine glycosylation sites follow: Asn-3022, Asn-3056, and Asn-3086. Asn-3228 and Asn-3260 each carry an N-linked (GlcNAc...) asparagine glycan. Asn-3339, Asn-3379, and Asn-3386 each carry an N-linked (GlcNAc...) asparagine glycan. A helical transmembrane segment spans residues 3488–3508 (VAAAILVPFFALILSGFAFYL). Topologically, residues 3509-3564 (YKHRTRPKVQYNGYAGHENSNGQASFENPMYDTNLKPTEAKAVRFDTTLNTVCTVV) are cytoplasmic.

This sequence belongs to the CSMD family.

It is found in the membrane. The protein is CUB and sushi domain-containing protein 1 (Csmd1) of Mus musculus (Mouse).